The following is a 666-amino-acid chain: Non-receptor tyrosine-protein kinase TNK1 (666 aa).

A phosphoserine mark is found at serine 60 and serine 96. Residues 116–377 enclose the Protein kinase domain; sequence VCRGELLGSG…PSFSHLEGLL (262 aa). Residues 122–130 and lysine 148 each bind ATP; that span reads LGSGCFGVV. Aspartate 245 functions as the Proton acceptor in the catalytic mechanism. Phosphoserine occurs at positions 255 and 411. Residues 380–445 enclose the SH3 domain; the sequence is AGPSEACCVR…PASAVTLADA (66 aa). The tract at residues 446 to 493 is disordered; the sequence is GGLPATRPVHRGTPARGDQHPGSIDGDRKKANLWDAPPARGQRRNMPL. Serine 502 is subject to Phosphoserine. A disordered region spans residues 506–579; the sequence is VLSLGPRPTG…MGMPGARKAA (74 aa). Threonine 514 bears the Phosphothreonine mark. Serine 519 is subject to Phosphoserine. Positions 531–541 are enriched in pro residues; it reads QGPPGLPPRPP. The segment covering 542–552 has biased composition (low complexity); the sequence is LSSSSPQPSQP. Serine 582 carries the post-translational modification Phosphoserine.

It belongs to the protein kinase superfamily. Tyr protein kinase family. As to quaternary structure, interacts with the SH3 domain of PLCG1 via its Pro-rich domain. Post-translationally, autophosphorylated on tyrosine residues. Expressed in all umbilical cord blood, bone marrow and adult blood cell sub-populations and in several leukemia cell lines. Highly expressed in fetal blood, brain, lung, liver and kidney. Detected at lower levels in adult prostate, testis, ovary, small intestine and colon. Not expressed in adult lung, liver, kidney or brain.

The protein resides in the cytoplasm. Its subcellular location is the membrane. The enzyme catalyses L-tyrosyl-[protein] + ATP = O-phospho-L-tyrosyl-[protein] + ADP + H(+). In terms of biological role, involved in negative regulation of cell growth. Has tumor suppressor properties. Plays a negative regulatory role in the Ras-MAPK pathway. May function in signaling pathways utilized broadly during fetal development and more selectively in adult tissues and in cells of the lymphohematopoietic system. Could specifically be involved in phospholipid signal transduction. This Homo sapiens (Human) protein is Non-receptor tyrosine-protein kinase TNK1.